Consider the following 126-residue polypeptide: Adenosine 5'-monophosphoramidase HINT1 (126 aa).

The residue at position 2 (Ala-2) is an N-acetylalanine. The HIT domain occupies 18–126 (IFGKIIRKEI…GGRQMNWPPG (109 aa)). Lys-21 and Lys-30 each carry N6-acetyllysine. An AMP-binding site is contributed by 43–44 (DI). Ser-45 and Ser-72 each carry phosphoserine. Residues Asn-99, 105–107 (GQS), and 112–114 (HLH) each bind AMP. The Histidine triad motif motif lies at 110–114 (HIHLH). His-112 (tele-AMP-histidine intermediate) is an active-site residue.

It belongs to the HINT family. In terms of assembly, homodimer. Interacts with CDK7. Interacts with RUVBL1 and RUVBL2 and is associated with the LEF1/TCF1-CTNNB1 complex and with a KAT5 histone acetyltransferase complex. Identified in a complex with MITF and CTNNB1. Interacts with CDC34 and RBX1, and is part of a SCF (SKP2-CUL1-F-box protein) E3 ubiquitin-protein ligase complex. Interacts with SUMO1, SUMO2 and RGS17. Interacts with the Ten-1 ICD form of TENM1. Interacts with CALM1; interaction increases in the presence of calcium ions.

It is found in the cytoplasm. The protein localises to the nucleus. It catalyses the reaction adenosine 5'-phosphoramidate + H2O = AMP + NH4(+). Its function is as follows. Exhibits adenosine 5'-monophosphoramidase activity, hydrolyzing purine nucleotide phosphoramidates with a single phosphate group such as adenosine 5'monophosphoramidate (AMP-NH2) to yield AMP and NH2. Hydrolyzes adenosine 5'monophosphomorpholidate (AMP-morpholidate) and guanosine 5'monophosphomorpholidate (GMP-morpholidate). Hydrolyzes lysyl-AMP (AMP-N-epsilon-(N-alpha-acetyl lysine methyl ester)) generated by lysine tRNA ligase, as well as Met-AMP, His-AMP and Asp-AMP, lysyl-GMP (GMP-N-epsilon-(N-alpha-acetyl lysine methyl ester)) and AMP-N-alanine methyl ester. Can also convert adenosine 5'-O-phosphorothioate and guanosine 5'-O-phosphorothioate to the corresponding nucleoside 5'-O-phosphates with concomitant release of hydrogen sulfide. In addition, functions as a scaffolding protein that modulates transcriptional activation by the LEF1/TCF1-CTNNB1 complex and by the complex formed with MITF and CTNNB1. Modulates p53/TP53 levels and p53/TP53-mediated apoptosis. Modulates proteasomal degradation of target proteins by the SCF (SKP2-CUL1-F-box protein) E3 ubiquitin-protein ligase complex. Also exhibits SUMO-specific isopeptidase activity, deconjugating SUMO1 from RANGAP1 and RGS17. The protein is Adenosine 5'-monophosphoramidase HINT1 (Hint1) of Rattus norvegicus (Rat).